Reading from the N-terminus, the 445-residue chain is Histidinol dehydrogenase (445 aa).

Residues Tyr-136, Gln-200, and Asn-228 each coordinate NAD(+). Substrate-binding residues include Thr-251, Gln-273, and His-276. Zn(2+)-binding residues include Gln-273 and His-276. Catalysis depends on proton acceptor residues Glu-342 and His-343. Residues His-343, Asp-376, Glu-430, and His-435 each contribute to the substrate site. Residue Asp-376 coordinates Zn(2+). His-435 provides a ligand contact to Zn(2+).

The protein belongs to the histidinol dehydrogenase family. It depends on Zn(2+) as a cofactor.

The catalysed reaction is L-histidinol + 2 NAD(+) + H2O = L-histidine + 2 NADH + 3 H(+). It functions in the pathway amino-acid biosynthesis; L-histidine biosynthesis; L-histidine from 5-phospho-alpha-D-ribose 1-diphosphate: step 9/9. Its function is as follows. Catalyzes the sequential NAD-dependent oxidations of L-histidinol to L-histidinaldehyde and then to L-histidine. This Mycolicibacterium smegmatis (Mycobacterium smegmatis) protein is Histidinol dehydrogenase (hisD).